The chain runs to 341 residues: Follistatin (341 aa).

Positions M1–A29 are cleaved as a signal peptide. One can recognise a TB domain in the interval G30–G103. 8 disulfide bridges follow: C32-C55, C42-C88, C56-C91, C95-C106, C100-C116, C118-C150, C122-C143, and C132-C164. An N-linked (GlcNAc...) asparagine glycan is attached at N72. The 24-residue stretch at T94–V117 folds into the Follistatin-like 1 domain. 3 Kazal-like domains span residues C100–K166, N186–K241, and R264–S318. N-linked (GlcNAc...) asparagine glycosylation occurs at N124. Positions T167 to V190 constitute a Follistatin-like 2 domain. 3 disulfides stabilise this stretch: C192–C225, C196–C218, and C207–C239. The region spanning S244 to A268 is the Follistatin-like 3 domain. Disulfide bonds link C270–C302, C274–C295, and C284–C316. The N-linked (GlcNAc...) asparagine glycan is linked to N288. Over residues E321–D333 the composition is skewed to acidic residues. Residues E321–W341 are disordered.

Monomer. As to expression, spemann organizer and notochord.

It is found in the secreted. In terms of biological role, binds directly to activin and functions as an activin antagonist which plays a role in neural induction. The short isoform is a more potent inhibitor of activin than the long isoform. Specific inhibitor of the biosynthesis and secretion of pituitary follicle stimulating hormone (FSH). This is Follistatin (fst) from Xenopus laevis (African clawed frog).